The sequence spans 232 residues: Ornithine carbamoyltransferase (232 aa).

Carbamoyl phosphate-binding positions include Q15, R39, and 66-69 (HPTQ). Residues N99, D163, and 167 to 168 (SM) contribute to the L-ornithine site. Carbamoyl phosphate-binding positions include 204-207 (HCLP) and T232.

It belongs to the aspartate/ornithine carbamoyltransferase superfamily. OTCase family.

It is found in the cytoplasm. It carries out the reaction carbamoyl phosphate + L-ornithine = L-citrulline + phosphate + H(+). The protein operates within amino-acid biosynthesis; L-arginine biosynthesis; L-arginine from L-ornithine and carbamoyl phosphate: step 1/3. Its function is as follows. Reversibly catalyzes the transfer of the carbamoyl group from carbamoyl phosphate (CP) to the N(epsilon) atom of ornithine (ORN) to produce L-citrulline. This is Ornithine carbamoyltransferase (argF) from Neisseria perflava.